The chain runs to 316 residues: Nod factor export ATP-binding protein I (316 aa).

Positions 18-248 (IDFSDVSKTY…LIGCEVIEIY (231 aa)) constitute an ABC transporter domain. Position 50-57 (50-57 (GPNGAGKS)) interacts with ATP.

The protein belongs to the ABC transporter superfamily. Lipooligosaccharide exporter (TC 3.A.1.102) family. As to quaternary structure, the complex is composed of two ATP-binding proteins (NodI) and two transmembrane proteins (NodJ).

It localises to the cell inner membrane. Its function is as follows. Part of the ABC transporter complex NodIJ involved in the export of the nodulation factors (Nod factors), the bacterial signal molecules that induce symbiosis and subsequent nodulation induction. Nod factors are LCO (lipo-chitin oligosaccharide), a modified beta-1,4-linked N-acetylglucosamine oligosaccharide. This subunit is responsible for energy coupling to the transport system. The chain is Nod factor export ATP-binding protein I from Rhizobium etli (strain ATCC 51251 / DSM 11541 / JCM 21823 / NBRC 15573 / CFN 42).